Here is a 539-residue protein sequence, read N- to C-terminus: MAESPGCCSVWARCLHCLYSCHWRKCPRERMQTSKCDCIWFGLLFLTFLLSLSWLYIGLVLLNDLHNFNEFLFRRWGHWMDWSLAFLLVISLLVTYASLLLVLALLLRLCRQPLHLHSLHKVLLLLIMLLVAAGLVGLDIQWQQEWHSLRVSLQATAPFLHIGAAAGIALLAWPVADTFYRIHRRGPKILLLLLFFGVVLVIYLAPLCISSPCIMEPRDLPPKPGLVGHRGAPMLAPENTLMSLRKTAECGATVFETDVMVSSDGVPFLMHDEHLSRTTNVASVFPTRITAHSSDFSWTELKRLNAGSWFLERRPFWGAKPLAGPDQKEAESQTVPALEELLEEAAALNLSIMFDLRRPPQNHTYYDTFVIQTLETVLNARVPQAMVFWLPDEDRANVQRRAPGMRQIYGRQGGNRTERPQFLNLPYQDLPLLDIKALHKDNVSVNLFVVNKPWLFSLLWCAGVDSVTTNDCQLLQQMRYPIWLITPQTYLIIWVITNCVSTMLLLWTFLLQRRFVKKRGKTGLETAVLLTRINNFMME.

The Cytoplasmic portion of the chain corresponds to 1-38 (MAESPGCCSVWARCLHCLYSCHWRKCPRERMQTSKCDC). The chain crosses the membrane as a helical span at residues 39–59 (IWFGLLFLTFLLSLSWLYIGL). At 60-85 (VLLNDLHNFNEFLFRRWGHWMDWSLA) the chain is on the extracellular side. A helical membrane pass occupies residues 86–106 (FLLVISLLVTYASLLLVLALL). Topologically, residues 107–121 (LRLCRQPLHLHSLHK) are cytoplasmic. A helical membrane pass occupies residues 122-142 (VLLLLIMLLVAAGLVGLDIQW). At 143–154 (QQEWHSLRVSLQ) the chain is on the extracellular side. A helical transmembrane segment spans residues 155-175 (ATAPFLHIGAAAGIALLAWPV). Topologically, residues 176–188 (ADTFYRIHRRGPK) are cytoplasmic. The helical transmembrane segment at 189–209 (ILLLLLFFGVVLVIYLAPLCI) threads the bilayer. Topologically, residues 210–490 (SSPCIMEPRD…PIWLITPQTY (281 aa)) are extracellular. A GP-PDE domain is found at 224-479 (PGLVGHRGAP…NDCQLLQQMR (256 aa)). Positions 256, 258, and 271 each coordinate a divalent metal cation. N-linked (GlcNAc...) asparagine glycosylation occurs at N442. A helical membrane pass occupies residues 491 to 511 (LIIWVITNCVSTMLLLWTFLL). Residues 512 to 539 (QRRFVKKRGKTGLETAVLLTRINNFMME) lie on the Cytoplasmic side of the membrane.

It belongs to the glycerophosphoryl diester phosphodiesterase family. Ca(2+) is required as a cofactor.

It is found in the cell membrane. It localises to the cytoplasm. Its subcellular location is the cytoskeleton. It carries out the reaction sn-glycero-3-phospho-1D-myo-inositol + H2O = 1D-myo-inositol 1-phosphate + glycerol + H(+). In terms of biological role, has glycerophosphoinositol inositolphosphodiesterase activity and specifically hydrolyzes glycerophosphoinositol, with no activity for other substrates such as glycerophosphoinositol 4-phosphate, glycerophosphocholine, glycerophosphoethanolamine, and glycerophosphoserine. Accelerates the program of osteoblast differentiation and growth. May play a role in remodeling of the actin cytoskeleton. This chain is Glycerophosphoinositol inositolphosphodiesterase GDPD2 (GDPD2), found in Homo sapiens (Human).